Consider the following 29-residue polypeptide: Cytolysin Oshem 1 (29 aa).

It localises to the secreted. Its subcellular location is the nematocyst. The protein localises to the target cell membrane. Its function is as follows. Cytolysin that shows moderate hemolysis and moderate myonecrosis. The protein is Cytolysin Oshem 1 of Olindias sambaquiensis (Hydromedusa).